The following is a 1238-amino-acid chain: Virulence sensor protein BvgS (1238 aa).

An N-terminal signal peptide occupies residues 1-32; that stretch reads MPAPHRLYPRSLICLAQALLAWALLAWAPAQA. Residues 33–307 are Cytoplasmic-facing; sequence SQELTLVGKA…REQQWMADHP (275 aa). Residues 308–331 form a helical membrane-spanning segment; sequence VVKVAVLNLFAPFTLFRTDEQFGG. Residues 332 to 541 lie on the Periplasmic side of the membrane; the sequence is ISAAVLQLLQ…PRTWYAYRNE (210 aa). Residues 542-563 form a helical membrane-spanning segment; it reads IYLLIGLGLLSALLFLSWIVYL. At 564–1238 the chain is on the cytoplasmic side; sequence RRQIRQRKRA…LEQRPHQDQP (675 aa). In terms of domain architecture, PAS spans 580 to 651; the sequence is QLEFMRVLID…MHEFLLTRVA (72 aa). Residues 652 to 708 form the PAC domain; that stretch reads AEREPRFEDRDVTLHGRTRHVYQWTIPYGDSLGELKGIIGGWIDITERAELLRKLHD. The Histidine kinase domain occupies 726–948; that stretch reads TMSHEIRTPM…TVSVDLRLTM (223 aa). The residue at position 729 (H729) is a Phosphohistidine; by autocatalysis. In terms of domain architecture, Response regulatory spans 974–1095; it reads RVLVVDDHKP…ALRQRLNEAV (122 aa). 4-aspartylphosphate is present on D1023. In terms of domain architecture, HPt spans 1133 to 1228; that stretch reads DEALIRQLLE…AALETQLRAW (96 aa). Residue H1172 is modified to Phosphohistidine.

Activation requires a sequential transfer of a phosphate group from a His in the primary transmitter domain, to an Asp in the receiver domain and to a His in the secondary transmitter domain.

It localises to the cell inner membrane. The catalysed reaction is ATP + protein L-histidine = ADP + protein N-phospho-L-histidine.. In terms of biological role, member of the two-component regulatory system BvgS/BvgA. Phosphorylates BvgA via a four-step phosphorelay in response to environmental signals. The chain is Virulence sensor protein BvgS (bvgS) from Bordetella pertussis (strain Tohama I / ATCC BAA-589 / NCTC 13251).